Consider the following 315-residue polypeptide: Ribosomal RNA small subunit methyltransferase H (315 aa).

S-adenosyl-L-methionine-binding positions include 37 to 39 (GGH), Asp-57, Phe-83, Asp-105, and Gln-112.

The protein belongs to the methyltransferase superfamily. RsmH family.

The protein resides in the cytoplasm. It carries out the reaction cytidine(1402) in 16S rRNA + S-adenosyl-L-methionine = N(4)-methylcytidine(1402) in 16S rRNA + S-adenosyl-L-homocysteine + H(+). Functionally, specifically methylates the N4 position of cytidine in position 1402 (C1402) of 16S rRNA. In Pseudomonas putida (strain W619), this protein is Ribosomal RNA small subunit methyltransferase H.